Here is a 387-residue protein sequence, read N- to C-terminus: Anhydro-N-acetylmuramic acid kinase (387 aa).

17–24 (GTSMDGVD) is an ATP binding site.

This sequence belongs to the anhydro-N-acetylmuramic acid kinase family.

It carries out the reaction 1,6-anhydro-N-acetyl-beta-muramate + ATP + H2O = N-acetyl-D-muramate 6-phosphate + ADP + H(+). It functions in the pathway amino-sugar metabolism; 1,6-anhydro-N-acetylmuramate degradation. The protein operates within cell wall biogenesis; peptidoglycan recycling. Functionally, catalyzes the specific phosphorylation of 1,6-anhydro-N-acetylmuramic acid (anhMurNAc) with the simultaneous cleavage of the 1,6-anhydro ring, generating MurNAc-6-P. Is required for the utilization of anhMurNAc either imported from the medium or derived from its own cell wall murein, and thus plays a role in cell wall recycling. In Burkholderia mallei (strain ATCC 23344), this protein is Anhydro-N-acetylmuramic acid kinase.